The following is a 753-amino-acid chain: 5-methyltetrahydropteroyltriglutamate--homocysteine methyltransferase (753 aa).

Residues 17–20 (RELK) and Lys117 contribute to the 5-methyltetrahydropteroyltri-L-glutamate site. L-homocysteine is bound by residues 431–433 (IGS) and Glu484. L-methionine-binding positions include 431–433 (IGS) and Glu484. 5-methyltetrahydropteroyltri-L-glutamate is bound by residues 515 to 516 (RC) and Trp561. Residue Asp599 coordinates L-homocysteine. L-methionine is bound at residue Asp599. Glu605 is a binding site for 5-methyltetrahydropteroyltri-L-glutamate. Zn(2+)-binding residues include His641, Cys643, and Glu665. The active-site Proton donor is the His694. A Zn(2+)-binding site is contributed by Cys726.

It belongs to the vitamin-B12 independent methionine synthase family. Zn(2+) serves as cofactor.

It catalyses the reaction 5-methyltetrahydropteroyltri-L-glutamate + L-homocysteine = tetrahydropteroyltri-L-glutamate + L-methionine. The protein operates within amino-acid biosynthesis; L-methionine biosynthesis via de novo pathway; L-methionine from L-homocysteine (MetE route): step 1/1. Functionally, catalyzes the transfer of a methyl group from 5-methyltetrahydrofolate to homocysteine resulting in methionine formation. The chain is 5-methyltetrahydropteroyltriglutamate--homocysteine methyltransferase from Escherichia coli O9:H4 (strain HS).